The following is a 604-amino-acid chain: Glutamine--fructose-6-phosphate aminotransferase [isomerizing] (604 aa).

The Nucleophile; for GATase activity role is filled by Cys2. Residues 2 to 216 enclose the Glutamine amidotransferase type-2 domain; that stretch reads CGIVGYVGFR…DGDVVRLTRE (215 aa). 2 consecutive SIS domains span residues 281–420 and 453–594; these read LALD…ARGA and VAEK…VDQP. The active-site For Fru-6P isomerization activity is the Lys599.

In terms of assembly, homodimer.

The protein resides in the cytoplasm. The enzyme catalyses D-fructose 6-phosphate + L-glutamine = D-glucosamine 6-phosphate + L-glutamate. Its function is as follows. Catalyzes the first step in hexosamine metabolism, converting fructose-6P into glucosamine-6P using glutamine as a nitrogen source. This is Glutamine--fructose-6-phosphate aminotransferase [isomerizing] from Thermus thermophilus (strain ATCC BAA-163 / DSM 7039 / HB27).